Reading from the N-terminus, the 86-residue chain is Large ribosomal subunit protein eL31 (86 aa).

This sequence belongs to the eukaryotic ribosomal protein eL31 family.

The polypeptide is Large ribosomal subunit protein eL31 (Methanopyrus kandleri (strain AV19 / DSM 6324 / JCM 9639 / NBRC 100938)).